We begin with the raw amino-acid sequence, 211 residues long: Probable endopeptidase cgR_2070 (211 aa).

Positions 1 to 35 (MGKHRRNNSNATRKAVAASAVALGATAAIASPAQA) are cleaved as a signal peptide. A NlpC/P60 domain is found at 97-211 (ASTGQAIVDA…YMPFHSAVRF (115 aa)). The active-site Nucleophile is the Cys127. His175 functions as the Proton acceptor in the catalytic mechanism. His187 is an active-site residue.

This sequence belongs to the peptidase C40 family.

It is found in the secreted. In Corynebacterium glutamicum (strain R), this protein is Probable endopeptidase cgR_2070.